A 196-amino-acid chain; its full sequence is Adenylate kinase (196 aa).

9-17 (GIPGVGKST) is a binding site for ATP.

The protein belongs to the archaeal adenylate kinase family.

The protein resides in the cytoplasm. It carries out the reaction AMP + ATP = 2 ADP. This is Adenylate kinase (adkA) from Pyrococcus horikoshii (strain ATCC 700860 / DSM 12428 / JCM 9974 / NBRC 100139 / OT-3).